Consider the following 236-residue polypeptide: Purine nucleoside phosphorylase DeoD-type 1 (236 aa).

A purine D-ribonucleoside is bound at residue histidine 5. Residues glycine 21, arginine 25, arginine 44, and 88-91 (RVGS) contribute to the phosphate site. A purine D-ribonucleoside-binding positions include 180 to 182 (EME) and 204 to 205 (TD). The Proton donor role is filled by aspartate 205.

This sequence belongs to the PNP/UDP phosphorylase family. Homohexamer; trimer of homodimers.

The catalysed reaction is a purine D-ribonucleoside + phosphate = a purine nucleobase + alpha-D-ribose 1-phosphate. It carries out the reaction a purine 2'-deoxy-D-ribonucleoside + phosphate = a purine nucleobase + 2-deoxy-alpha-D-ribose 1-phosphate. Catalyzes the reversible phosphorolytic breakdown of the N-glycosidic bond in the beta-(deoxy)ribonucleoside molecules, with the formation of the corresponding free purine bases and pentose-1-phosphate. The chain is Purine nucleoside phosphorylase DeoD-type 1 from Shewanella oneidensis (strain ATCC 700550 / JCM 31522 / CIP 106686 / LMG 19005 / NCIMB 14063 / MR-1).